Reading from the N-terminus, the 88-residue chain is Small ribosomal subunit protein bS16 (88 aa).

The protein belongs to the bacterial ribosomal protein bS16 family.

In Staphylococcus saprophyticus subsp. saprophyticus (strain ATCC 15305 / DSM 20229 / NCIMB 8711 / NCTC 7292 / S-41), this protein is Small ribosomal subunit protein bS16.